A 474-amino-acid polypeptide reads, in one-letter code: C6 finger domain transcription factor aclZ (474 aa).

The zn(2)-C6 fungal-type DNA-binding region spans 42 to 69; sequence CNQCHAAKVRCSGERTGCDRCNNLQYQC. Disordered stretches follow at residues 85–148 and 177–206; these read RGNK…SHSA and MSSDQDPSRSRGHSLQAPSHSGHSIADSHT. Positions 90 to 105 are enriched in polar residues; it reads VRTTTEALQRPATAST. Over residues 117 to 138 the composition is skewed to basic and acidic residues; sequence TDQRSENDPLSRSDFGEQDAAH.

It localises to the nucleus. In terms of biological role, transcription factor that specifically regulates the gene cluster that mediates the biosynthesis of aspirochlorine (or antibiotic A30641), an unusual halogenated spiro compound with distinctive antifungal properties due to selective inhibition of protein biosynthesis, and which is also active against bacteria, viruses, and murine tumor cells. This is C6 finger domain transcription factor aclZ from Aspergillus oryzae (strain ATCC 42149 / RIB 40) (Yellow koji mold).